A 108-amino-acid chain; its full sequence is Integration host factor subunit alpha (108 aa).

This sequence belongs to the bacterial histone-like protein family. In terms of assembly, heterodimer of an alpha and a beta chain.

This protein is one of the two subunits of integration host factor, a specific DNA-binding protein that functions in genetic recombination as well as in transcriptional and translational control. The sequence is that of Integration host factor subunit alpha from Bartonella henselae (strain ATCC 49882 / DSM 28221 / CCUG 30454 / Houston 1) (Rochalimaea henselae).